Here is a 172-residue protein sequence, read N- to C-terminus: Cytochrome c oxidase subunit 4 isoform 2, mitochondrial (172 aa).

A mitochondrion-targeting transit peptide spans 1 to 18 (MFSRATRSLVMKTGGLRT). The disordered stretch occupies residues 1–33 (MFSRATRSLVMKTGGLRTQGTHSPGSAASSSQR). Positions 16–33 (LRTQGTHSPGSAASSSQR) are enriched in polar residues. Topologically, residues 19-101 (QGTHSPGSAA…TFAEMNHRSN (83 aa)) are mitochondrial matrix. Residues 102-127 (EWKTVMGCVFFFIGFTALVIWWQRVY) form a helical membrane-spanning segment. Residues 128–172 (VFPKKVVTLTEERKAQQLQRLLDMKSNPIQGLSAHWDYEKKEWKK) lie on the Mitochondrial intermembrane side of the membrane.

This sequence belongs to the cytochrome c oxidase IV family. Component of the cytochrome c oxidase (complex IV, CIV), a multisubunit enzyme composed of 14 subunits. The complex is composed of a catalytic core of 3 subunits MT-CO1, MT-CO2 and MT-CO3, encoded in the mitochondrial DNA, and 11 supernumerary subunits COX4I, COX5A, COX5B, COX6A, COX6B, COX6C, COX7A, COX7B, COX7C, COX8 and NDUFA4, which are encoded in the nuclear genome. The complex exists as a monomer or a dimer and forms supercomplexes (SCs) in the inner mitochondrial membrane with NADH-ubiquinone oxidoreductase (complex I, CI) and ubiquinol-cytochrome c oxidoreductase (cytochrome b-c1 complex, complex III, CIII), resulting in different assemblies (supercomplex SCI(1)III(2)IV(1) and megacomplex MCI(2)III(2)IV(2)). As to expression, highly expressed in lung.

Its subcellular location is the mitochondrion inner membrane. Its pathway is energy metabolism; oxidative phosphorylation. Functionally, component of the cytochrome c oxidase, the last enzyme in the mitochondrial electron transport chain which drives oxidative phosphorylation. The respiratory chain contains 3 multisubunit complexes succinate dehydrogenase (complex II, CII), ubiquinol-cytochrome c oxidoreductase (cytochrome b-c1 complex, complex III, CIII) and cytochrome c oxidase (complex IV, CIV), that cooperate to transfer electrons derived from NADH and succinate to molecular oxygen, creating an electrochemical gradient over the inner membrane that drives transmembrane transport and the ATP synthase. Cytochrome c oxidase is the component of the respiratory chain that catalyzes the reduction of oxygen to water. Electrons originating from reduced cytochrome c in the intermembrane space (IMS) are transferred via the dinuclear copper A center (CU(A)) of subunit 2 and heme A of subunit 1 to the active site in subunit 1, a binuclear center (BNC) formed by heme A3 and copper B (CU(B)). The BNC reduces molecular oxygen to 2 water molecules using 4 electrons from cytochrome c in the IMS and 4 protons from the mitochondrial matrix. This chain is Cytochrome c oxidase subunit 4 isoform 2, mitochondrial (Cox4i2), found in Rattus norvegicus (Rat).